The primary structure comprises 468 residues: tRNA modification GTPase MnmE (468 aa).

Residues R29, E97, and K136 each coordinate (6S)-5-formyl-5,6,7,8-tetrahydrofolate. Positions 232 to 390 constitute a TrmE-type G domain; that stretch reads GFELAIVGRP…VVAHIVARME (159 aa). N242 contacts K(+). GTP is bound by residues 242 to 247, 261 to 267, and 286 to 289; these read NVGKSS, TDLAGTT, and DTAG. A Mg(2+)-binding site is contributed by S246. Residues T261, L263, and T266 each coordinate K(+). A Mg(2+)-binding site is contributed by T267. Residue K468 participates in (6S)-5-formyl-5,6,7,8-tetrahydrofolate binding.

The protein belongs to the TRAFAC class TrmE-Era-EngA-EngB-Septin-like GTPase superfamily. TrmE GTPase family. Homodimer. Heterotetramer of two MnmE and two MnmG subunits. K(+) is required as a cofactor.

The protein resides in the cytoplasm. Its function is as follows. Exhibits a very high intrinsic GTPase hydrolysis rate. Involved in the addition of a carboxymethylaminomethyl (cmnm) group at the wobble position (U34) of certain tRNAs, forming tRNA-cmnm(5)s(2)U34. This is tRNA modification GTPase MnmE from Magnetococcus marinus (strain ATCC BAA-1437 / JCM 17883 / MC-1).